We begin with the raw amino-acid sequence, 226 residues long: Elongation factor 1-delta 2 (226 aa).

The segment at 82–131 is disordered; the sequence is TACSVSPTADQKAPAADEEDDDDVDLFGEETEEEKKAAEERAAAVKASGK. The segment covering 97 to 113 has biased composition (acidic residues); sequence ADEEDDDDVDLFGEETE. Residues 114–124 show a composition bias toward basic and acidic residues; that stretch reads EEKKAAEERAA.

Belongs to the EF-1-beta/EF-1-delta family. As to quaternary structure, EF-1 is composed of 4 subunits: alpha, beta (1B-alpha=beta'), delta (1B-beta), and gamma (1B-gamma).

Its function is as follows. EF-1-beta and EF-1-beta' stimulate the exchange of GDP bound to EF-1-alpha to GTP. The polypeptide is Elongation factor 1-delta 2 (Oryza sativa subsp. japonica (Rice)).